The chain runs to 442 residues: Probable carboxypeptidase PAAG_00768 (442 aa).

The signal sequence occupies residues 1 to 20 (MKLQYLVALLFVQAVPPVTA). The N-linked (GlcNAc...) asparagine glycan is linked to Asn-102. Residue Asp-160 coordinates Zn(2+). Glu-192 acts as the Proton acceptor in catalysis. Glu-193 contacts Zn(2+). Residue Asn-343 is glycosylated (N-linked (GlcNAc...) asparagine).

Belongs to the peptidase M20A family. The cofactor is Zn(2+).

The protein localises to the secreted. The protein is Probable carboxypeptidase PAAG_00768 of Paracoccidioides lutzii (strain ATCC MYA-826 / Pb01) (Paracoccidioides brasiliensis).